Consider the following 335-residue polypeptide: UDP-N-acetylglucosamine--N-acetylmuramyl-(pentapeptide) pyrophosphoryl-undecaprenol N-acetylglucosamine transferase (335 aa).

Residues 9 to 11 (TGG), asparagine 123, serine 176, and glutamine 274 each bind UDP-N-acetyl-alpha-D-glucosamine.

This sequence belongs to the glycosyltransferase 28 family. MurG subfamily.

The protein resides in the cell inner membrane. The catalysed reaction is di-trans,octa-cis-undecaprenyl diphospho-N-acetyl-alpha-D-muramoyl-L-alanyl-D-glutamyl-meso-2,6-diaminopimeloyl-D-alanyl-D-alanine + UDP-N-acetyl-alpha-D-glucosamine = di-trans,octa-cis-undecaprenyl diphospho-[N-acetyl-alpha-D-glucosaminyl-(1-&gt;4)]-N-acetyl-alpha-D-muramoyl-L-alanyl-D-glutamyl-meso-2,6-diaminopimeloyl-D-alanyl-D-alanine + UDP + H(+). Its pathway is cell wall biogenesis; peptidoglycan biosynthesis. Its function is as follows. Cell wall formation. Catalyzes the transfer of a GlcNAc subunit on undecaprenyl-pyrophosphoryl-MurNAc-pentapeptide (lipid intermediate I) to form undecaprenyl-pyrophosphoryl-MurNAc-(pentapeptide)GlcNAc (lipid intermediate II). In Campylobacter fetus subsp. fetus (strain 82-40), this protein is UDP-N-acetylglucosamine--N-acetylmuramyl-(pentapeptide) pyrophosphoryl-undecaprenol N-acetylglucosamine transferase.